The following is a 258-amino-acid chain: Protein STAY-GREEN LIKE, chloroplastic (258 aa).

This sequence belongs to the staygreen family. In terms of tissue distribution, strongly expressed in leaves, stems and panicles, and at lower levels in roots and seeds.

Promotes chlorophyll degradation in leaves. May be involved in LHCI proteins degradation, regulating the balance between LHCI and LHCII. The chain is Protein STAY-GREEN LIKE, chloroplastic from Oryza sativa subsp. japonica (Rice).